The chain runs to 660 residues: Bifunctional polymyxin resistance protein ArnA (660 aa).

Residues Met1–Leu304 form a formyltransferase ArnAFT region. The Proton donor; for formyltransferase activity role is filled by His104. (6R)-10-formyltetrahydrofolate is bound by residues Arg114 and Val136–Asp140. The segment at Arg314–Ser660 is dehydrogenase ArnADH. NAD(+) contacts are provided by residues Asp347 and Asp368–Ile369. Residues Ala393, Tyr398, and Thr432–Ser433 contribute to the UDP-alpha-D-glucuronate site. Residue Glu434 is the Proton acceptor; for decarboxylase activity of the active site. Residues Arg460, Asn492, Lys526–Arg535, and Tyr613 contribute to the UDP-alpha-D-glucuronate site. Arg619 serves as the catalytic Proton donor; for decarboxylase activity.

It in the N-terminal section; belongs to the Fmt family. UDP-L-Ara4N formyltransferase subfamily. The protein in the C-terminal section; belongs to the NAD(P)-dependent epimerase/dehydratase family. UDP-glucuronic acid decarboxylase subfamily. As to quaternary structure, homohexamer, formed by a dimer of trimers.

The catalysed reaction is UDP-alpha-D-glucuronate + NAD(+) = UDP-beta-L-threo-pentopyranos-4-ulose + CO2 + NADH. It catalyses the reaction UDP-4-amino-4-deoxy-beta-L-arabinose + (6R)-10-formyltetrahydrofolate = UDP-4-deoxy-4-formamido-beta-L-arabinose + (6S)-5,6,7,8-tetrahydrofolate + H(+). It functions in the pathway nucleotide-sugar biosynthesis; UDP-4-deoxy-4-formamido-beta-L-arabinose biosynthesis; UDP-4-deoxy-4-formamido-beta-L-arabinose from UDP-alpha-D-glucuronate: step 1/3. Its pathway is nucleotide-sugar biosynthesis; UDP-4-deoxy-4-formamido-beta-L-arabinose biosynthesis; UDP-4-deoxy-4-formamido-beta-L-arabinose from UDP-alpha-D-glucuronate: step 3/3. It participates in bacterial outer membrane biogenesis; lipopolysaccharide biosynthesis. In terms of biological role, bifunctional enzyme that catalyzes the oxidative decarboxylation of UDP-glucuronic acid (UDP-GlcUA) to UDP-4-keto-arabinose (UDP-Ara4O) and the addition of a formyl group to UDP-4-amino-4-deoxy-L-arabinose (UDP-L-Ara4N) to form UDP-L-4-formamido-arabinose (UDP-L-Ara4FN). The modified arabinose is attached to lipid A and is required for resistance to polymyxin and cationic antimicrobial peptides. The chain is Bifunctional polymyxin resistance protein ArnA from Salmonella enteritidis PT4 (strain P125109).